Here is a 155-residue protein sequence, read N- to C-terminus: Probable methanogenesis regulatory protein FilR2 (155 aa).

The Response regulatory domain occupies 18–142 (IILLVEDNNA…DLKRTVEEIK (125 aa)). Aspartate 75 is subject to 4-aspartylphosphate.

Post-translationally, phosphorylated by FilI.

Its function is as follows. Member of the two-component regulatory system FilI/FilRs, which is involved in the regulation of methanogenesis. This chain is Probable methanogenesis regulatory protein FilR2, found in Methanothrix harundinacea (strain 6Ac) (Methanosaeta harundinacea).